The sequence spans 217 residues: UPF0502 protein ESA_02280 (217 aa).

The protein belongs to the UPF0502 family.

In Cronobacter sakazakii (strain ATCC BAA-894) (Enterobacter sakazakii), this protein is UPF0502 protein ESA_02280.